A 139-amino-acid chain; its full sequence is Large ribosomal subunit protein uL16c (139 aa).

The protein belongs to the universal ribosomal protein uL16 family. Part of the 50S ribosomal subunit.

It is found in the plastid. Its subcellular location is the chloroplast. The sequence is that of Large ribosomal subunit protein uL16c from Cicer arietinum (Chickpea).